We begin with the raw amino-acid sequence, 359 residues long: Photosystem II protein D1 1 (359 aa).

3 helical membrane-spanning segments follow: residues tyrosine 29–isoleucine 46, histidine 118–leucine 133, and tryptophan 142–alanine 156. Histidine 118 is a chlorophyll a binding site. Tyrosine 126 contributes to the pheophytin a binding site. Residues aspartate 170 and glutamate 189 each coordinate [CaMn4O5] cluster. A helical membrane pass occupies residues phenylalanine 197–leucine 218. Histidine 198 provides a ligand contact to chlorophyll a. Residues histidine 215 and serine 264–phenylalanine 265 contribute to the a quinone site. Histidine 215 is a Fe cation binding site. Position 272 (histidine 272) interacts with Fe cation. Residues phenylalanine 274–leucine 288 traverse the membrane as a helical segment. Positions 332, 333, 342, and 344 each coordinate [CaMn4O5] cluster. Residues alanine 345–glycine 359 constitute a propeptide that is removed on maturation.

This sequence belongs to the reaction center PufL/M/PsbA/D family. PSII is composed of 1 copy each of membrane proteins PsbA, PsbB, PsbC, PsbD, PsbE, PsbF, PsbH, PsbI, PsbJ, PsbK, PsbL, PsbM, PsbT, PsbX, PsbY, PsbZ, Psb30/Ycf12, peripheral proteins PsbO, CyanoQ (PsbQ), PsbU, PsbV and a large number of cofactors. It forms dimeric complexes. It depends on The D1/D2 heterodimer binds P680, chlorophylls that are the primary electron donor of PSII, and subsequent electron acceptors. It shares a non-heme iron and each subunit binds pheophytin, quinone, additional chlorophylls, carotenoids and lipids. D1 provides most of the ligands for the Mn4-Ca-O5 cluster of the oxygen-evolving complex (OEC). There is also a Cl(-1) ion associated with D1 and D2, which is required for oxygen evolution. The PSII complex binds additional chlorophylls, carotenoids and specific lipids. as a cofactor. Tyr-161 forms a radical intermediate that is referred to as redox-active TyrZ, YZ or Y-Z. Post-translationally, C-terminally processed by CtpA; processing is essential to allow assembly of the oxygen-evolving complex and thus photosynthetic growth.

It is found in the cellular thylakoid membrane. The enzyme catalyses 2 a plastoquinone + 4 hnu + 2 H2O = 2 a plastoquinol + O2. Its function is as follows. Photosystem II (PSII) is a light-driven water:plastoquinone oxidoreductase that uses light energy to abstract electrons from H(2)O, generating O(2) and a proton gradient subsequently used for ATP formation. It consists of a core antenna complex that captures photons, and an electron transfer chain that converts photonic excitation into a charge separation. The D1/D2 (PsbA/PsbD) reaction center heterodimer binds P680, the primary electron donor of PSII as well as several subsequent electron acceptors. In Synechococcus sp. (strain CC9605), this protein is Photosystem II protein D1 1.